The primary structure comprises 346 residues: MEEEKHHTEHVPEWKKDEIENIMELIQSHKVFGMVGIEGILATKIQKIRRDLKDVAVLKVSRNSLTERALNQLGESIPEMNKYLDKQTALVFTNESPFKLYKVLEQTKTPSPIKGGAIAPADIIVQKGPTSFPPGPILGELQSAGIPASIDAGKVAVKETKVVCKAGEVVSQKLATMLTKLEIYPLIVGLDLRAVYDNGAIYEPELLAIDESQYFSDITRAAQSAFNLAVNTAYPTSATIGTLLAKAFAESKNLGVNAVVFDSGVMDALLAKAHVQMTSVASEAADKDANAVDDQLREVLGAAASAAAAVAKEPEKKEEVKEEEEEEEEEDHSEEDGMAGLGSLFG.

Residues 307-346 (AAAVAKEPEKKEEVKEEEEEEEEEDHSEEDGMAGLGSLFG) form a disordered region. Residues 321–337 (KEEEEEEEEEDHSEEDG) show a composition bias toward acidic residues.

The protein belongs to the universal ribosomal protein uL10 family. Part of the 50S ribosomal subunit. Forms part of the ribosomal stalk which helps the ribosome interact with GTP-bound translation factors. Forms both a pentameric L10(L12)2(L12)2 and heptameric L10(L12)2(L12)2(L12)2 complex, where L10 forms an elongated spine to which the L12 dimers bind in a sequential fashion. The proportion of heptameric complexes increases during cell growth.

Functionally, forms part of the ribosomal stalk, playing a central role in the interaction of the ribosome with GTP-bound translation factors. This is Large ribosomal subunit protein uL10 from Methanosarcina barkeri (strain Fusaro / DSM 804).